Reading from the N-terminus, the 161-residue chain is Transcription antitermination protein NusB (161 aa).

Belongs to the NusB family.

Functionally, involved in transcription antitermination. Required for transcription of ribosomal RNA (rRNA) genes. Binds specifically to the boxA antiterminator sequence of the ribosomal RNA (rrn) operons. The sequence is that of Transcription antitermination protein NusB from Syntrophus aciditrophicus (strain SB).